A 455-amino-acid polypeptide reads, in one-letter code: Phosphoglucosamine/phosphogalactosamine mutase (455 aa).

Residue S97 is the Phosphoserine intermediate of the active site. Mg(2+) is bound by residues S97, D241, D243, and D245. The residue at position 97 (S97) is a Phosphoserine.

This sequence belongs to the phosphohexose mutase family. Mg(2+) is required as a cofactor. Activated by phosphorylation.

It carries out the reaction alpha-D-glucosamine 1-phosphate = D-glucosamine 6-phosphate. The enzyme catalyses D-galactosamine 6-phosphate = alpha-D-galactosamine 1-phosphate. In terms of biological role, involved in the synthesis of UDP-N-acetylglucosamine (UDP-GlcNAc) and UDP-N-acetylgalactosamine (UDP-GalNAc). Catalyzes the conversion of glucosamine-6-phosphate to glucosamine-1-phosphate and of galactosamine-6-phosphate to galactosamine-1-phosphate. This is Phosphoglucosamine/phosphogalactosamine mutase from Sulfurisphaera tokodaii (strain DSM 16993 / JCM 10545 / NBRC 100140 / 7) (Sulfolobus tokodaii).